The following is a 133-amino-acid chain: Small ribosomal subunit protein uS11 (133 aa).

It belongs to the universal ribosomal protein uS11 family. As to quaternary structure, part of the 30S ribosomal subunit. Interacts with proteins S7 and S18. Binds to IF-3.

In terms of biological role, located on the platform of the 30S subunit, it bridges several disparate RNA helices of the 16S rRNA. Forms part of the Shine-Dalgarno cleft in the 70S ribosome. This chain is Small ribosomal subunit protein uS11, found in Burkholderia pseudomallei (strain 1106a).